The sequence spans 416 residues: MSTKQVTCRYFMHGVCREGSQCLFSHDLANSKPSTICKYYQKGYCAYGARCRYDHTKPPAAAGGAVGPAPNPSPSSGLHSPHPSPDIATSVMRTHSNEPGKREKKTLVLRDRNLTGLAEDKTPPSKVNNPGGCSDPQTSPEMKPHSYLDAIRTGLDDLEASSSYSNEPQLCPYAAAGECRFGDACVYLHGDMCEICRLQVLHPFDPEQRKAHEKMCMSTFEHEMEKAFAFQASQDKVCSICMEVILEKASASERRFGILSNCSHTYCLSCIRQWRCAKQFENPIIKSCPECRVISEFVIPSVYWVEDQNKKNELIEAFKQGMGKKACKYFEQGKGTCPFGSKCLYRHAYPDGRLAEPEKPRKQLSSEGTVRFFNSVRLWDFIENRETRQVPSTDDVDVTELGDLFMHLSGVESSEP.

2 consecutive C3H1-type zinc fingers follow at residues 2 to 29 (STKQVTCRYFMHGVCREGSQCLFSHDLA) and 31 to 58 (SKPSTICKYYQKGYCAYGARCRYDHTKP). Residues 61–144 (AAGGAVGPAP…DPQTSPEMKP (84 aa)) are disordered. The span at 95-123 (HSNEPGKREKKTLVLRDRNLTGLAEDKTP) shows a compositional bias: basic and acidic residues. S139 carries the phosphoserine modification. The segment at 165–192 (SNEPQLCPYAAAGECRFGDACVYLHGDM) adopts a C3H1-type 3 zinc-finger fold. Residues 193–222 (CEICRLQVLHPFDPEQRKAHEKMCMSTFEH) are makorin-type Cys-His. An RING-type zinc finger spans residues 238 to 292 (CSICMEVILEKASASERRFGILSNCSHTYCLSCIRQWRCAKQFENPIIKSCPECR). The segment at 321–350 (GMGKKACKYFEQGKGTCPFGSKCLYRHAYP) adopts a C3H1-type 4 zinc-finger fold.

Interacts with PDLIM2 (via LIM zinc-binding domain). Interacts with RELA. Highly expressed in the testis, and lower expression in the brain, thymus, heart, lung, liver, spleen, kidney, ovary, uterus, and seminal vesicle (at protein level). Expressed in primary immune cells, such as CD4-positive and CD8-positive T cells, CD19-positive B cells and CD11c-positive dendritic cells, and in embryonic fibroblasts (at protein level).

It localises to the cytoplasm. It is found in the nucleus. It carries out the reaction S-ubiquitinyl-[E2 ubiquitin-conjugating enzyme]-L-cysteine + [acceptor protein]-L-lysine = [E2 ubiquitin-conjugating enzyme]-L-cysteine + N(6)-ubiquitinyl-[acceptor protein]-L-lysine.. It participates in protein modification; protein ubiquitination. Its function is as follows. E3 ubiquitin ligase catalyzing the covalent attachment of ubiquitin moieties onto substrate proteins. Promotes the polyubiquitination and proteasome-dependent degradation of RELA/p65, thereby suppressing RELA-mediated NF-kappa-B transactivation and negatively regulating inflammatory responses. Plays a role in the regulation of spermiation and in male fertility. This Mus musculus (Mouse) protein is E3 ubiquitin-protein ligase makorin-2 (Mkrn2).